Reading from the N-terminus, the 159-residue chain is MKKELKKQIVEELSKEFTNEVCVFYADFKGQTVKDLEALRKAVREAEGKARIIKNTLARIAFANNGIEAEFEENNIFIWGEDQITLAKIITKHAAANKDTFKIKGAVIEGEVKDAAYVDEVSKLPTKDELLGMVAFMMKAPVAKFAWALNKLIEKKESE.

The protein belongs to the universal ribosomal protein uL10 family. In terms of assembly, part of the ribosomal stalk of the 50S ribosomal subunit. The N-terminus interacts with L11 and the large rRNA to form the base of the stalk. The C-terminus forms an elongated spine to which L12 dimers bind in a sequential fashion forming a multimeric L10(L12)X complex.

In terms of biological role, forms part of the ribosomal stalk, playing a central role in the interaction of the ribosome with GTP-bound translation factors. The chain is Large ribosomal subunit protein uL10 from Nautilia profundicola (strain ATCC BAA-1463 / DSM 18972 / AmH).